Reading from the N-terminus, the 150-residue chain is MAALVLPNSLPEELAARTFLRFLRGAPRPAAGGAAPLAYRLAYVHDLLVELARHGLAAPDAAAAAFGGARPPPAPAGVPAAAARAAILTVEAATRAQSESDLWTLLRRGLATASTVRWGADGPHFPPTWCEASTARCGTPDNAALIFGRV.

Belongs to the baculo-herpesviridae alkaline nuclease family.

The protein is Alkaline nuclease (UL12) of Suid herpesvirus 1 (strain NIA-3) (SuHV-1).